The sequence spans 416 residues: Polyadenylation and cleavage factor homolog 1 (416 aa).

A compositionally biased stretch (polar residues) spans Met-1–Thr-17. The disordered stretch occupies residues Met-1–Ser-80. A compositionally biased stretch (low complexity) spans Ser-70–Ser-80. Positions Lys-199–Ser-220 form a coiled coil. The C2H2-type zinc finger occupies Arg-254–His-276.

In terms of assembly, forms a complex with cleavage and polyadenylation specificity factor (CPSF) subunits CLPS3, CLPS5, CPSF30, PCFS4, PCFS5, CSTF77 and FIPS3.

The protein resides in the nucleus. This is Polyadenylation and cleavage factor homolog 1 from Arabidopsis thaliana (Mouse-ear cress).